We begin with the raw amino-acid sequence, 601 residues long: Proteasome-associated ATPase (601 aa).

Residues methionine 1–glycine 15 show a composition bias toward gly residues. The tract at residues methionine 1–alanine 31 is disordered. Positions glycine 18–alanine 31 are enriched in basic and acidic residues. A coiled-coil region spans residues glycine 18–glutamine 106. Glycine 289 to leucine 294 lines the ATP pocket. Residues tyrosine 600–leucine 601 form a docks into pockets in the proteasome alpha-ring region.

The protein belongs to the AAA ATPase family. As to quaternary structure, homohexamer. Assembles into a hexameric ring structure that caps the 20S proteasome core. Strongly interacts with the prokaryotic ubiquitin-like protein Pup through a hydrophobic interface; the interacting region of ARC lies in its N-terminal coiled-coil domain. There is one Pup binding site per ARC hexamer ring. Upon ATP-binding, the C-terminus of ARC interacts with the alpha-rings of the proteasome core, possibly by binding to the intersubunit pockets.

The protein operates within protein degradation; proteasomal Pup-dependent pathway. Functionally, ATPase which is responsible for recognizing, binding, unfolding and translocation of pupylated proteins into the bacterial 20S proteasome core particle. May be essential for opening the gate of the 20S proteasome via an interaction with its C-terminus, thereby allowing substrate entry and access to the site of proteolysis. Thus, the C-termini of the proteasomal ATPase may function like a 'key in a lock' to induce gate opening and therefore regulate proteolysis. This is Proteasome-associated ATPase from Frankia alni (strain DSM 45986 / CECT 9034 / ACN14a).